A 476-amino-acid polypeptide reads, in one-letter code: Cysteine--tRNA ligase (476 aa).

Cys-29 provides a ligand contact to Zn(2+). Positions 31 to 41 (PTVYDYPHLGH) match the 'HIGH' region motif. Zn(2+) is bound by residues Cys-209, His-234, and Glu-238. The short motif at 266–270 (KMSKS) is the 'KMSKS' region element. Lys-269 is a binding site for ATP.

Belongs to the class-I aminoacyl-tRNA synthetase family. The cofactor is Zn(2+).

The protein resides in the cytoplasm. The catalysed reaction is tRNA(Cys) + L-cysteine + ATP = L-cysteinyl-tRNA(Cys) + AMP + diphosphate. The protein is Cysteine--tRNA ligase (cysS) of Pyrococcus horikoshii (strain ATCC 700860 / DSM 12428 / JCM 9974 / NBRC 100139 / OT-3).